We begin with the raw amino-acid sequence, 647 residues long: Starch synthase 1, chloroplastic/amyloplastic (647 aa).

The N-terminal 41 residues, 1-41 (MAATGVGAGCLAPSVRLRADPATAARASACVVRARLRRVAR), are a transit peptide targeting the chloroplast. The segment covering 66-91 (PLVPGFLAPPPPAPAQSPAPTQPPLP) has biased composition (pro residues). The interval 66–95 (PLVPGFLAPPPPAPAQSPAPTQPPLPDAGV) is disordered. K153 is an ADP-alpha-D-glucose binding site.

The protein belongs to the glycosyltransferase 1 family. Bacterial/plant glycogen synthase subfamily.

The protein resides in the plastid. It localises to the chloroplast. The protein localises to the amyloplast. It catalyses the reaction [(1-&gt;4)-alpha-D-glucosyl](n) + ADP-alpha-D-glucose = [(1-&gt;4)-alpha-D-glucosyl](n+1) + ADP + H(+). The protein operates within glycan biosynthesis; starch biosynthesis. This is Starch synthase 1, chloroplastic/amyloplastic (WSSI-2) from Triticum aestivum (Wheat).